The following is a 306-amino-acid chain: Replication termination factor 2 (306 aa).

The segment at 193-276 is disordered; sequence AKLEKKTKKP…RSIADSEESE (84 aa). The segment covering 226–240 has biased composition (basic and acidic residues); it reads GKPEEASLDSREKKT. The span at 243-255 shows a compositional bias: polar residues; that stretch reads APKSTAMNESSSG. S287 is modified (phosphoserine).

The protein belongs to the rtf2 family. As to quaternary structure, interacts with DDI2; probably also interacts with DDI1. Post-translationally, undergoes proteasomal degradation, via DDI1 and DDI2. Removal from stalled replisomes and degradation are required for genome stability.

It localises to the chromosome. In terms of biological role, replication termination factor which is a component of the elongating replisome. Required for ATR pathway signaling upon DNA damage and has a positive activity during DNA replication. Might function to facilitate fork pausing at replication fork barriers like the rDNA. May be globally required to stimulate ATR signaling after the fork stalls or encounters a lesion. Interacts with nascent DNA. The chain is Replication termination factor 2 from Homo sapiens (Human).